Consider the following 3977-residue polypeptide: Hybrid PKS-NRPS synthetase gkaA (3977 aa).

In terms of domain architecture, Ketosynthase family 3 (KS3) spans 4 to 441 (EEPIAVIGSG…GTNAHVILEN (438 aa)). Residues Cys177, His316, and His361 each act as for beta-ketoacyl synthase activity in the active site. The Malonyl-CoA:ACP transacylase (MAT) domain occupies 551-867 (VFTGQGAQWP…TGVIHRGKND (317 aa)). The interval 937 to 1072 (NPLLGTRTTD…GRITVTLGES (136 aa)) is N-terminal hotdog fold. The region spanning 937 to 1241 (NPLLGTRTTD…VVAFSEATAD (305 aa)) is the PKS/mFAS DH domain. The active-site Proton acceptor; for dehydratase activity is His969. Positions 1087–1241 (LVSIPQDRFY…VVAFSEATAD (155 aa)) are C-terminal hotdog fold. Asp1147 functions as the Proton donor; for dehydratase activity in the catalytic mechanism. Residues 1286 to 1580 (YMKKTVEEFP…FSGIDSSTPE (295 aa)) form a methyltransferase (cMeT) domain region. Positions 2128–2301 (TYVLFGLTSD…AASILHIGAV (174 aa)) constitute a Ketoreductase (KR) domain. The Carrier 1 domain occupies 2409–2490 (SEVFEIISGA…QLLEYAIDNM (82 aa)). Position 2450 is an O-(pantetheine 4'-phosphoryl)serine (Ser2450). A disordered region spans residues 2497-2542 (HSNGEQGTVSDSGSTNIQLTPASTPSVPSVNLASDSTGSSQVGEDV). Over residues 2499 to 2538 (NGEQGTVSDSGSTNIQLTPASTPSVPSVNLASDSTGSSQV) the composition is skewed to polar residues. The segment at 2584-3018 (EKIIPMSPGQ…LKDISLFSKE (435 aa)) is condensation. The segment at 3048–3437 (IAEHPDTISI…GALEILGRID (390 aa)) is adenylation. The Carrier 2 domain occupies 3552–3632 (FSLTPTEDKL…AMASLITPAS (81 aa)). Ser3592 carries the O-(pantetheine 4'-phosphoryl)serine modification. One can recognise a Thioester reductase (TE) domain in the interval 3672 to 3890 (LTGATGFLGH…FVDLVSVQNV (219 aa)).

The protein in the C-terminal section; belongs to the NRP synthetase family. It depends on pantetheine 4'-phosphate as a cofactor.

The protein operates within mycotoxin biosynthesis. Functionally, hybrid PKS-NRPS synthetase; part of the gene cluster that mediates the biosynthesis of GKK1032, fungal natural products containing a macrocyclic para-cyclophane connected to a decahydrofluorene ring system that show potent antitumor activities. Within the pathway, the PKS-NRPS gkaA, with the help of the trans-enoyl reductase gkaC, synthesize the polyketide-tyrosyl acyl thioester product which can be reductively off-loaded by the terminal reductase (R) domain in gkaA. The PKS module of gkaA acts in combination with the trans-acting enoyl reductase gkaC to produce a methylated polyketide attached to the ACP domain. In parallel, the adenylation (A) domain of the NRPS module activated L-tyrosine, which is then transferred to the ACP domain. The condensation (C) domain subsequently links this group to the polyketide chain, forming an enzyme-bound amide. The alpha/beta hydrolase gkaG is then required to catalyze the subsequent Knoevenagel condensation that affords the 3-pyrrolin-2-one ring, whereas the three proteins gkaB, gkadX and gkaZ then function synergistically to form the cyclophane. The sequence is that of Hybrid PKS-NRPS synthetase gkaA from Penicillium citrinum.